The primary structure comprises 449 residues: Aspartyl protease AED3 (449 aa).

A signal peptide spans M1 to A23. Residues Y104 to A444 form the Peptidase A1 domain. D122 is a catalytic residue. Cysteines 132 and 138 form a disulfide. N-linked (GlcNAc...) asparagine glycans are attached at residues N140, N148, N184, N211, and N297. Residue D328 is part of the active site. N-linked (GlcNAc...) asparagine glycosylation is present at N353. C366 and C405 are disulfide-bonded.

Belongs to the peptidase A1 family.

The protein localises to the secreted. Its subcellular location is the extracellular space. It localises to the apoplast. This Arabidopsis thaliana (Mouse-ear cress) protein is Aspartyl protease AED3.